We begin with the raw amino-acid sequence, 371 residues long: Queuine tRNA-ribosyltransferase (371 aa).

Aspartate 90 functions as the Proton acceptor in the catalytic mechanism. Substrate is bound by residues 90–94, aspartate 144, glutamine 189, and glycine 215; that span reads DSGGF. The segment at 246-252 is RNA binding; that stretch reads GVGTPEN. Residue aspartate 265 is the Nucleophile of the active site. The interval 270–274 is RNA binding; important for wobble base 34 recognition; that stretch reads TRNAR. Zn(2+) is bound by residues cysteine 303, cysteine 305, cysteine 308, and histidine 334.

The protein belongs to the queuine tRNA-ribosyltransferase family. Homodimer. Within each dimer, one monomer is responsible for RNA recognition and catalysis, while the other monomer binds to the replacement base PreQ1. Requires Zn(2+) as cofactor.

It carries out the reaction 7-aminomethyl-7-carbaguanine + guanosine(34) in tRNA = 7-aminomethyl-7-carbaguanosine(34) in tRNA + guanine. It participates in tRNA modification; tRNA-queuosine biosynthesis. In terms of biological role, catalyzes the base-exchange of a guanine (G) residue with the queuine precursor 7-aminomethyl-7-deazaguanine (PreQ1) at position 34 (anticodon wobble position) in tRNAs with GU(N) anticodons (tRNA-Asp, -Asn, -His and -Tyr). Catalysis occurs through a double-displacement mechanism. The nucleophile active site attacks the C1' of nucleotide 34 to detach the guanine base from the RNA, forming a covalent enzyme-RNA intermediate. The proton acceptor active site deprotonates the incoming PreQ1, allowing a nucleophilic attack on the C1' of the ribose to form the product. After dissociation, two additional enzymatic reactions on the tRNA convert PreQ1 to queuine (Q), resulting in the hypermodified nucleoside queuosine (7-(((4,5-cis-dihydroxy-2-cyclopenten-1-yl)amino)methyl)-7-deazaguanosine). The protein is Queuine tRNA-ribosyltransferase of Helicobacter pylori (strain G27).